The chain runs to 578 residues: Oxygen sensor histidine kinase response regulator DevS/DosS (578 aa).

GAF domains lie at 63 to 200 and 231 to 369; these read DLEA…GIAV and EPAT…ALAW. Residue histidine 149 coordinates heme. Residues 383-578 enclose the Histidine kinase domain; sequence VLTDRDRIAR…VLRWSAPLSQ (196 aa). Histidine 395 is modified (phosphohistidine; by autocatalysis).

The cofactor is Mg(2+). Heme is required as a cofactor.

The protein localises to the cytoplasm. It catalyses the reaction ATP + protein L-histidine = ADP + protein N-phospho-L-histidine.. In terms of biological role, member of the two-component regulatory system DevR/DevS (DosR/DosS) involved in onset of the dormancy response. Regulates an approximately 48-member regulon. Required for full induction of the DevR (DosR) regulon; acts later than DosT to positively regulate expression of the DevR regulon during adaptation to anaerobiosis. Characterized as an oxygen sensor; O(2) acts as a switch, with O(2)-bound Fe(2+) protein inactive in autophosphorylation. Has also been suggested to act as a redox sensor, or perhaps as a dual oxygen/redox sensor. Donates a phosphate group to transcriptional regulator DevR (DosR). The protein is Oxygen sensor histidine kinase response regulator DevS/DosS (devS) of Mycobacterium tuberculosis (strain CDC 1551 / Oshkosh).